An 88-amino-acid chain; its full sequence is Small ribosomal subunit protein bS16 (88 aa).

Belongs to the bacterial ribosomal protein bS16 family.

The chain is Small ribosomal subunit protein bS16 from Anaeromyxobacter sp. (strain Fw109-5).